The chain runs to 111 residues: UPF0060 membrane protein Pden_1837 (111 aa).

A run of 4 helical transmembrane segments spans residues 7–27, 30–50, 62–82, and 91–111; these read IAVY…FWAW, LGKS…FAWL, AYAA…WLTE, and ILGG…PRAA.

This sequence belongs to the UPF0060 family.

Its subcellular location is the cell inner membrane. The chain is UPF0060 membrane protein Pden_1837 from Paracoccus denitrificans (strain Pd 1222).